A 463-amino-acid chain; its full sequence is Nuclear hormone receptor family member nhr-79 (463 aa).

The nuclear receptor DNA-binding region spans 3–81; sequence RGKCMVCDSP…AGMMRDLVQA (79 aa). NR C4-type zinc fingers lie at residues 6-27 and 43-64; these read CMVC…CKAC and CLGD…CRHC. Positions 83–119 are disordered; that stretch reads REIKSDKGKNSRNSSQSEDFFSPPPEQPGPSNYFDQF. Residues 203-463 enclose the NR LBD domain; sequence YTEQVINLNM…ILKDMLKFQY (261 aa).

Belongs to the nuclear hormone receptor family.

The protein resides in the nucleus. Functionally, orphan nuclear receptor. This is Nuclear hormone receptor family member nhr-79 (nhr-79) from Caenorhabditis elegans.